Reading from the N-terminus, the 131-residue chain is Small ribosomal subunit protein uS11 (131 aa).

The protein belongs to the universal ribosomal protein uS11 family. In terms of assembly, part of the 30S ribosomal subunit. Interacts with proteins S7 and S18. Binds to IF-3.

In terms of biological role, located on the platform of the 30S subunit, it bridges several disparate RNA helices of the 16S rRNA. Forms part of the Shine-Dalgarno cleft in the 70S ribosome. This chain is Small ribosomal subunit protein uS11, found in Geobacter metallireducens (strain ATCC 53774 / DSM 7210 / GS-15).